Here is a 309-residue protein sequence, read N- to C-terminus: Protein phosphatase 1 regulatory subunit 42 (309 aa).

7 LRR repeats span residues 29 to 50, 51 to 72, 73 to 94, 95 to 116, 117 to 138, 147 to 168, and 169 to 190; these read KITH…SLCK, NLSV…NYAT, NLTH…RSLK, KLEK…EGLG, ELRE…LFDP, SLCI…ELLE, and NLNQ…EFLL. An LRRCT domain is found at 204–242; it reads NPVCLKPKYRDRLILVSKSLEFLDGKEIKNIERQFLMNW.

As to quaternary structure, interacts with PPP1CC isoform gamma-2; the interaction is direct. Interacts with actin, dynein, KIF5B, KIFC1 and tubulin. Associates with microtubules. Phosphorylated; in the testis.

It is found in the cytoplasm. The protein localises to the cytoskeleton. Its subcellular location is the microtubule organizing center. The protein resides in the centrosome. Regulates phosphatase activity of protein phosphatase 1 (PP1) complexes in the testis. The protein is Protein phosphatase 1 regulatory subunit 42 of Homo sapiens (Human).